The chain runs to 138 residues: Putative pre-16S rRNA nuclease (138 aa).

The protein belongs to the YqgF nuclease family.

It is found in the cytoplasm. Functionally, could be a nuclease involved in processing of the 5'-end of pre-16S rRNA. The sequence is that of Putative pre-16S rRNA nuclease from Klebsiella pneumoniae subsp. pneumoniae (strain ATCC 700721 / MGH 78578).